The following is a 936-amino-acid chain: Protein translocase subunit SecA (936 aa).

Residues glutamine 90, glycine 108–threonine 112, and aspartate 499 contribute to the ATP site.

This sequence belongs to the SecA family. As to quaternary structure, monomer and homodimer. Part of the essential Sec protein translocation apparatus which comprises SecA, SecYEG and auxiliary proteins SecDF. Other proteins may also be involved.

Its subcellular location is the cell inner membrane. The protein resides in the cellular thylakoid membrane. It localises to the cytoplasm. It carries out the reaction ATP + H2O + cellular proteinSide 1 = ADP + phosphate + cellular proteinSide 2.. In terms of biological role, part of the Sec protein translocase complex. Interacts with the SecYEG preprotein conducting channel. Has a central role in coupling the hydrolysis of ATP to the transfer of proteins into and across the cell membrane, serving as an ATP-driven molecular motor driving the stepwise translocation of polypeptide chains across the membrane. Functionally, probably participates in protein translocation into and across both the cytoplasmic and thylakoid membranes in cyanobacterial cells. The sequence is that of Protein translocase subunit SecA from Trichodesmium erythraeum (strain IMS101).